Consider the following 319-residue polypeptide: Transmembrane and ubiquitin-like domain-containing protein 2 (319 aa).

The helical transmembrane segment at Val-36–Thr-56 threads the bilayer. Disordered regions lie at residues Val-88 to Glu-130 and Gln-146 to Cys-165. Residues Pro-95–Glu-111 show a composition bias toward basic and acidic residues. The Ubiquitin-like domain occupies Ile-173–Ala-246. Helical transmembrane passes span Leu-264 to Trp-284 and Phe-293 to Val-313.

It is found in the membrane. The sequence is that of Transmembrane and ubiquitin-like domain-containing protein 2 (Tmub2) from Rattus norvegicus (Rat).